A 704-amino-acid chain; its full sequence is Acetyl-coenzyme A synthetase 1 (704 aa).

Residues 239 to 242 (RGGK) and Thr358 each bind CoA. ATP-binding positions include 434–436 (GEP), 458–463 (DTYWQT), Asp550, and Arg565. Residue Ser573 participates in CoA binding. Residue Arg576 participates in ATP binding. Arg641 is a CoA binding site. The Microbody targeting signal motif lies at 702–704 (VKL).

The protein belongs to the ATP-dependent AMP-binding enzyme family.

It is found in the microsome. Its subcellular location is the endoplasmic reticulum. It catalyses the reaction acetate + ATP + CoA = acetyl-CoA + AMP + diphosphate. The chain is Acetyl-coenzyme A synthetase 1 (ACS1) from Candida glabrata (strain ATCC 2001 / BCRC 20586 / JCM 3761 / NBRC 0622 / NRRL Y-65 / CBS 138) (Yeast).